The chain runs to 270 residues: tRNA pseudouridine synthase A (270 aa).

Catalysis depends on Asp55, which acts as the Nucleophile. Tyr110 lines the substrate pocket.

Belongs to the tRNA pseudouridine synthase TruA family.

It catalyses the reaction uridine(38/39/40) in tRNA = pseudouridine(38/39/40) in tRNA. Its function is as follows. Formation of pseudouridine at positions 38, 39 and 40 in the anticodon stem and loop of transfer RNAs. This chain is tRNA pseudouridine synthase A, found in Methanoculleus marisnigri (strain ATCC 35101 / DSM 1498 / JR1).